The primary structure comprises 130 residues: MAKQSVVKIKKKVKRVITDGVAHISASFNNTIVTITDRQGNSLFWCTSGASGFRGSRKCTPFAAQVAAEKAGRAVLDYGMKSLEVRINGPGPGRESAVRSLNNVGYKITNIIDVTPIPHNGCRPPKKRRV.

The protein belongs to the universal ribosomal protein uS11 family. In terms of assembly, part of the 30S ribosomal subunit. Interacts with proteins S7 and S18. Binds to IF-3.

Functionally, located on the platform of the 30S subunit, it bridges several disparate RNA helices of the 16S rRNA. Forms part of the Shine-Dalgarno cleft in the 70S ribosome. This chain is Small ribosomal subunit protein uS11, found in Xylella fastidiosa (strain 9a5c).